A 542-amino-acid polypeptide reads, in one-letter code: Organic anion transporter 3 (542 aa).

Residues 1–9 (MTFSEILDR) are Cytoplasmic-facing. S4 is subject to Phosphoserine. Residues 10 to 30 (VGSMGPFQFLHVALLGFPILG) traverse the membrane as a helical segment. Residues 31–123 (MANHNLLQIF…LVCSSNKLKE (93 aa)) are Extracellular-facing. The N-linked (GlcNAc...) asparagine glycan is linked to N86. Residues 124–144 (MAQSIFMAGILIGGLVLGDLS) form a helical membrane-spanning segment. The Cytoplasmic segment spans residues 145–150 (DRFGRK). Residues 151–171 (PILTCCYLLLAASGSSTAFSP) form a helical membrane-spanning segment. The Extracellular portion of the chain corresponds to 172 to 176 (TLPIY). The helical transmembrane segment at 177–197 (MVFRFLCGFSISGISLSTVIL) threads the bilayer. Residues 198 to 212 (NVEWVPTKMRAITST) are Cytoplasmic-facing. The chain crosses the membrane as a helical span at residues 213–233 (AIGYCYTIGQFILPGLAYAIP). The Extracellular segment spans residues 234 to 236 (QWR). A helical transmembrane segment spans residues 237–257 (WLQLTVSVPYFIFSLLSWWIP). Over 258–327 (ESIRWLVLAG…FRTPILRRVT (70 aa)) the chain is Cytoplasmic. A helical transmembrane segment spans residues 328–348 (LCLSLAWFATGFAYYSLAMGV). Over 349–354 (EEFGVN) the chain is Extracellular. Residues 355 to 375 (IYILQIIFGGVDIPAKFITIL) form a helical membrane-spanning segment. Topologically, residues 376–389 (SLSYLGRHITQGAA) are cytoplasmic. The helical transmembrane segment at 390 to 410 (LILAGAAILSLIFVPMDMSLL) threads the bilayer. R411 is a topological domain (extracellular). A helical membrane pass occupies residues 412 to 432 (TILAVFGKGCLSGSFSCLFLY). Topologically, residues 433 to 471 (TSELFPTVIRQTGMGISNVWARVGSMISPLVKITGEIQP) are cytoplasmic. Residues 472–492 (FIPNIIYGTVALLGGSAALFL) form a helical membrane-spanning segment. Residues 493–542 (PETLNQPLPETLEDMENWFLQSKKLKQEPEAEKASQRIPLQPSGPGVDRS) are Extracellular-facing. Positions 518–527 (KQEPEAEKAS) are enriched in basic and acidic residues. Residues 518–542 (KQEPEAEKASQRIPLQPSGPGVDRS) are disordered.

Belongs to the major facilitator (TC 2.A.1) superfamily. Organic cation transporter (TC 2.A.1.19) family.

It localises to the basolateral cell membrane. The catalysed reaction is estrone 3-sulfate(out) + glutarate(in) = estrone 3-sulfate(in) + glutarate(out). The enzyme catalyses estrone 3-sulfate(in) + 2-oxoglutarate(out) = estrone 3-sulfate(out) + 2-oxoglutarate(in). It carries out the reaction glutarate(in) + 2-oxoglutarate(out) = glutarate(out) + 2-oxoglutarate(in). It catalyses the reaction urate(in) + 2-oxoglutarate(out) = urate(out) + 2-oxoglutarate(in). The catalysed reaction is taurocholate(out) + glutarate(in) = taurocholate(in) + glutarate(out). The enzyme catalyses dehydroepiandrosterone 3-sulfate(out) + glutarate(in) = dehydroepiandrosterone 3-sulfate(in) + glutarate(out). It carries out the reaction prostaglandin F2alpha(out) + glutarate(in) = prostaglandin F2alpha(in) + glutarate(out). It catalyses the reaction prostaglandin F2alpha(out) + 2-oxoglutarate(in) = prostaglandin F2alpha(in) + 2-oxoglutarate(out). The catalysed reaction is (R)-carnitine(out) + 2-oxoglutarate(in) = (R)-carnitine(in) + 2-oxoglutarate(out). The enzyme catalyses glutarate(in) + (R)-carnitine(out) = glutarate(out) + (R)-carnitine(in). It carries out the reaction prostaglandin E2(out) + 2-oxoglutarate(in) = prostaglandin E2(in) + 2-oxoglutarate(out). It catalyses the reaction prostaglandin E2(out) + glutarate(in) = prostaglandin E2(in) + glutarate(out). The catalysed reaction is urate(in) + glutarate(out) = urate(out) + glutarate(in). The enzyme catalyses taurocholate(out) + 2-oxoglutarate(in) = taurocholate(in) + 2-oxoglutarate(out). It carries out the reaction dehydroepiandrosterone 3-sulfate(out) + 2-oxoglutarate(in) = dehydroepiandrosterone 3-sulfate(in) + 2-oxoglutarate(out). It catalyses the reaction kynurenate(out) + a dicarboxylate(in) = kynurenate(in) + a dicarboxylate(out). The catalysed reaction is (indol-3-yl)acetate(out) + a dicarboxylate(in) = (indol-3-yl)acetate(in) + a dicarboxylate(out). The enzyme catalyses indoxyl sulfate(out) + a dicarboxylate(in) = indoxyl sulfate(in) + a dicarboxylate(out). It carries out the reaction N-benzoylglycine(out) + a dicarboxylate(in) = N-benzoylglycine(in) + a dicarboxylate(out). It catalyses the reaction 3-carboxy-4-methyl-5-propyl-2-furanpropanoate(out) + a dicarboxylate(in) = 3-carboxy-4-methyl-5-propyl-2-furanpropanoate(in) + a dicarboxylate(out). The catalysed reaction is (6R)-L-erythro-5,6,7,8-tetrahydrobiopterin(out) + a dicarboxylate(in) = (6R)-L-erythro-5,6,7,8-tetrahydrobiopterin(in) + a dicarboxylate(out). The enzyme catalyses L-erythro-7,8-dihydrobiopterin(out) + a dicarboxylate(in) = L-erythro-7,8-dihydrobiopterin(in) + a dicarboxylate(out). It carries out the reaction L-sepiapterin(out) + a dicarboxylate(in) = L-sepiapterin(in) + a dicarboxylate(out). Functions as an organic anion/dicarboxylate exchanger that couples organic anion uptake indirectly to the sodium gradient. Transports organic anions such as estrone 3-sulfate (E1S) and urate in exchange for dicarboxylates such as glutarate or ketoglutarate (2-oxoglutarate). Plays an important role in the excretion of endogenous and exogenous organic anions, especially from the kidney and the brain. E1S transport is pH- and chloride-dependent and may also involve E1S/cGMP exchange. Responsible for the transport of prostaglandin E2 (PGE2) and prostaglandin F2(alpha) (PGF2(alpha)) in the basolateral side of the renal tubule. Involved in the transport of neuroactive tryptophan metabolites kynurenate and xanthurenate. Functions as a biopterin transporters involved in the uptake and the secretion of coenzymes tetrahydrobiopterin (BH4), dihydrobiopterin (BH2) and sepiapterin to urine, thereby determining baseline levels of blood biopterins. May be involved in the basolateral transport of steviol, a metabolite of the popular sugar substitute stevioside. May participate in the detoxification/ renal excretion of drugs and xenobiotics, such as the histamine H(2)-receptor antagonists fexofenadine and cimetidine, the antibiotic benzylpenicillin (PCG), the anionic herbicide 2,4-dichloro-phenoxyacetate (2,4-D), the diagnostic agent p-aminohippurate (PAH), the antiviral acyclovir (ACV), and the mycotoxin ochratoxin (OTA), by transporting these exogenous organic anions across the cell membrane in exchange for dicarboxylates such as 2-oxoglutarate. Contributes to the renal uptake of potent uremic toxins (indoxyl sulfate (IS), indole acetate (IA), hippurate/N-benzoylglycine (HA) and 3-carboxy-4-methyl-5-propyl-2-furanpropionate (CMPF)), pravastatin, PCG, E1S and dehydroepiandrosterone sulfate (DHEAS), and is partly involved in the renal uptake of temocaprilat (an angiotensin-converting enzyme (ACE) inhibitor). May contribute to the release of cortisol in the adrenals. Involved in one of the detoxification systems on the choroid plexus (CP), removes substrates such as E1S or taurocholate (TC), PCG, 2,4-D and PAH, from the cerebrospinal fluid (CSF) to the blood for eventual excretion in urine and bile. Also contributes to the uptake of several other organic compounds such as the prostanoids prostaglandin E(2) and prostaglandin F(2-alpha), L-carnitine, and the therapeutic drugs allopurinol, 6-mercaptopurine (6-MP) and 5-fluorouracil (5-FU). Mediates the transport of PAH, PCG, and the statins pravastatin and pitavastatin, from the cerebrum into the blood circulation across the blood-brain barrier (BBB). In summary, plays a role in the efflux of drugs and xenobiotics, helping reduce their undesired toxicological effects on the body. This Oryctolagus cuniculus (Rabbit) protein is Organic anion transporter 3 (SLC22A8).